A 348-amino-acid chain; its full sequence is GTPase Obg (348 aa).

Residues 1 to 159 (MKFLDLAKVY…RTIWLRLKLI (159 aa)) form the Obg domain. The 168-residue stretch at 160–327 (ADAGLLGLPN…VLRAVRAEID (168 aa)) folds into the OBG-type G domain. Residues 166–173 (GLPNAGKS), 191–195 (FTTLH), 212–215 (DIPG), 279–282 (NKID), and 308–310 (SSV) each bind GTP. Mg(2+)-binding residues include serine 173 and threonine 193.

It belongs to the TRAFAC class OBG-HflX-like GTPase superfamily. OBG GTPase family. Monomer. It depends on Mg(2+) as a cofactor.

The protein localises to the cytoplasm. Its function is as follows. An essential GTPase which binds GTP, GDP and possibly (p)ppGpp with moderate affinity, with high nucleotide exchange rates and a fairly low GTP hydrolysis rate. Plays a role in control of the cell cycle, stress response, ribosome biogenesis and in those bacteria that undergo differentiation, in morphogenesis control. This chain is GTPase Obg, found in Ruegeria sp. (strain TM1040) (Silicibacter sp.).